A 97-amino-acid chain; its full sequence is Carboxypeptidase inhibitor (97 aa).

The first 22 residues, 1–22, serve as a signal peptide directing secretion; it reads MAATLPVFAVVFFAMVLASSQA.

Its subcellular location is the secreted. In terms of biological role, potent competitive inhibitor of metallo-carboxypeptidases CPA1, CPA2, CPB, CPN, and TAF1a. Also inhibits human CPA4. Accelerates fibrinolysis in vitro and may contribute to the maintenance of host blood liquidity during feeding. This chain is Carboxypeptidase inhibitor, found in Rhipicephalus bursa (Tick).